A 309-amino-acid polypeptide reads, in one-letter code: MITFLPIIFSILIVVTFVIGNFANGFIALANSIEWFKRQKISFADQILTALAVSRVGLLWVLLLNWYATELNPAFYSIEVRITAYNLWAVINHFSNWLATSLSIFYLLKIANFSNLIFLRLKRRVKSVVLVILLGPLLFLVCHLFVINMNQIIWTKEYEGNMTWKIKLRSAMYLSNITVTILANLVPFTLTLISFLLLICSLCKHLKKMQLHGKGSQDPSMKVHIKALQTVTSFLLLCAIYFLSIIMSVWSFESLENKPVFMFCEAITFSYPSTHPFILIWGNKKLKQTFLSVLWHVRYWVKGEEPSSP.

Methionine 1 is a topological domain (extracellular). Residues 2-22 (ITFLPIIFSILIVVTFVIGNF) form a helical membrane-spanning segment. The Cytoplasmic segment spans residues 23 to 46 (ANGFIALANSIEWFKRQKISFADQ). A helical transmembrane segment spans residues 47–67 (ILTALAVSRVGLLWVLLLNWY). At 68-86 (ATELNPAFYSIEVRITAYN) the chain is on the extracellular side. Residues 87–107 (LWAVINHFSNWLATSLSIFYL) form a helical membrane-spanning segment. The Cytoplasmic portion of the chain corresponds to 108 to 126 (LKIANFSNLIFLRLKRRVK). The chain crosses the membrane as a helical span at residues 127–147 (SVVLVILLGPLLFLVCHLFVI). The Extracellular portion of the chain corresponds to 148-178 (NMNQIIWTKEYEGNMTWKIKLRSAMYLSNIT). N-linked (GlcNAc...) asparagine glycans are attached at residues asparagine 161 and asparagine 176. Residues 179–199 (VTILANLVPFTLTLISFLLLI) traverse the membrane as a helical segment. Over 200 to 229 (CSLCKHLKKMQLHGKGSQDPSMKVHIKALQ) the chain is Cytoplasmic. Residues 230–250 (TVTSFLLLCAIYFLSIIMSVW) traverse the membrane as a helical segment. Residues 251-259 (SFESLENKP) lie on the Extracellular side of the membrane. A helical membrane pass occupies residues 260–280 (VFMFCEAITFSYPSTHPFILI). Topologically, residues 281-309 (WGNKKLKQTFLSVLWHVRYWVKGEEPSSP) are cytoplasmic.

Belongs to the G-protein coupled receptor T2R family.

It localises to the membrane. The protein localises to the cell projection. Its subcellular location is the cilium membrane. In terms of biological role, receptor that may play a role in the perception of bitterness and is gustducin-linked. May play a role in sensing the chemical composition of the gastrointestinal content. The activity of this receptor may stimulate alpha gustducin, mediate PLC-beta-2 activation and lead to the gating of TRPM5. In airway epithelial cells, binding of bitter compounds increases the intracellular calcium ion concentration and stimulates ciliary beat frequency. The chain is Taste receptor type 2 member 46 (TAS2R46) from Pan paniscus (Pygmy chimpanzee).